The following is a 294-amino-acid chain: MNQKQLEQMKTSKGFIAALDQSGGSTPKALAAYGIPEDSYNNEDEMFDLVHEMRTRIITSKAFDSDSIIGAILFEQTMDREIEGMYTGDYLAEKKGIVPFLKVDKGLAEETNGVQLMKPIDNLDETLRRANERNIFGTKMRSVIKQANPKAIKEVVDQQFDIGKKIIAAGLVPIIEPEVDIHSPEKEKCEDLLKAEIINHLNQLSEDENVMLKLTIPTKKNLYKELIDHPRVVRVVALSGGYSTDVANEKLKENNGLIASFSRALSQDLNADQSDEDFNLALEKAVKSIYDASV.

The Proton acceptor role is filled by E176. K213 functions as the Schiff-base intermediate with dihydroxyacetone-P in the catalytic mechanism.

This sequence belongs to the class I fructose-bisphosphate aldolase family.

It catalyses the reaction beta-D-fructose 1,6-bisphosphate = D-glyceraldehyde 3-phosphate + dihydroxyacetone phosphate. The protein operates within carbohydrate degradation; glycolysis; D-glyceraldehyde 3-phosphate and glycerone phosphate from D-glucose: step 4/4. This is Fructose-bisphosphate aldolase class 1 from Oceanobacillus iheyensis (strain DSM 14371 / CIP 107618 / JCM 11309 / KCTC 3954 / HTE831).